The chain runs to 359 residues: snRNA-activating protein complex subunit 2 (359 aa).

Positions 1–11 (MKPPQRRRRVP) are enriched in basic residues. Disordered regions lie at residues 1–22 (MKPP…TGPT), 157–221 (NQDG…GSST), and 291–327 (TALP…SEPI).

Part of the SNAPc complex composed of 5 subunits: SNAPC1, SNAPC2, SNAPC3, SNAPC4 and SNAPC5. SNAPC2 interacts with TBP and SNAPC4.

Its subcellular location is the nucleus. Part of the SNAPc complex required for the transcription of both RNA polymerase II and III small-nuclear RNA genes. Binds to the proximal sequence element (PSE), a non-TATA-box basal promoter element common to these 2 types of genes. Recruits TBP and BRF2 to the U6 snRNA TATA box. This Mus musculus (Mouse) protein is snRNA-activating protein complex subunit 2 (Snapc2).